We begin with the raw amino-acid sequence, 41 residues long: Large ribosomal subunit protein bL36 (41 aa).

It belongs to the bacterial ribosomal protein bL36 family.

The chain is Large ribosomal subunit protein bL36 from Rickettsia africae (strain ESF-5).